The following is a 109-amino-acid chain: Death-associated protein-like 1 homolog (109 aa).

Disordered regions lie at residues 1-51 (MVQL…KPRS) and 76-100 (FPET…ISRI). A compositionally biased stretch (basic and acidic residues) spans 31 to 50 (KSADENANVEKETRKTDKPR).

It belongs to the DAP-DAPL1 family. In terms of assembly, associates with ribosomes; preventing translation. Interacts with eiF5a (eif5a and eif5a2); preventing translation.

Its function is as follows. Ribosome-binding protein that promotes ribosome hibernation, a process during which ribosomes are stabilized in an inactive state and preserved from proteasomal degradation. Acts via its association with eiF5a (eif5a and eif5a2) at the polypeptide exit tunnel of the ribosome, preventing mRNA translation. Plays a key role in ribosome hibernation in the mature egg by preventing mRNA translation, leading to ribosome inactivation. Ribosomes, which are produced in large quantities during oogenesis, are stored and translationally repressed in the egg and early embryo. The sequence is that of Death-associated protein-like 1 homolog from Danio rerio (Zebrafish).